The chain runs to 385 residues: Glucans biosynthesis protein C (385 aa).

The next 10 helical transmembrane spans lie at 17–37 (AWLM…SHTW), 60–80 (MQVF…RYPL), 91–111 (VGIP…IMLQ), 137–157 (ISHL…VWIF), 173–193 (KFSM…YAVI), 212–232 (FIVM…LAFI), 239–259 (LFTT…VAYL), 274–294 (TESV…FSFG), 311–331 (ASLF…AYIT), and 338–358 (WLGF…LYEI).

The protein belongs to the acyltransferase 3 family. OpgC subfamily.

Its subcellular location is the cell membrane. The protein operates within glycan metabolism; osmoregulated periplasmic glucan (OPG) biosynthesis. Necessary for the succinyl substitution of periplasmic glucans. Could catalyze the transfer of succinyl residues from the cytoplasmic side of the membrane to the nascent glucan backbones on the periplasmic side of the membrane. This chain is Glucans biosynthesis protein C, found in Shigella sonnei (strain Ss046).